Reading from the N-terminus, the 120-residue chain is Large ribosomal subunit protein uL18 (120 aa).

It belongs to the universal ribosomal protein uL18 family. Part of the 50S ribosomal subunit; part of the 5S rRNA/L5/L18/L25 subcomplex. Contacts the 5S and 23S rRNAs.

Its function is as follows. This is one of the proteins that bind and probably mediate the attachment of the 5S RNA into the large ribosomal subunit, where it forms part of the central protuberance. The sequence is that of Large ribosomal subunit protein uL18 from Bartonella henselae (strain ATCC 49882 / DSM 28221 / CCUG 30454 / Houston 1) (Rochalimaea henselae).